A 408-amino-acid chain; its full sequence is Glutamate N-acetyltransferase (408 aa).

Residues Thr150, Lys176, Thr189, Glu271, Asn403, and Thr408 each coordinate substrate. Thr189 acts as the Nucleophile in catalysis.

This sequence belongs to the ArgJ family. As to quaternary structure, heterotetramer of two alpha and two beta chains.

It is found in the cytoplasm. It carries out the reaction N(2)-acetyl-L-ornithine + L-glutamate = N-acetyl-L-glutamate + L-ornithine. It participates in amino-acid biosynthesis; L-arginine biosynthesis; L-ornithine and N-acetyl-L-glutamate from L-glutamate and N(2)-acetyl-L-ornithine (cyclic): step 1/1. Functionally, catalyzes the transfer of the acetyl group from N(2)-acetylornithine to glutamate, forming N-acetylglutamate and L-ornithine. The sequence is that of Glutamate N-acetyltransferase from Methanococcus maripaludis (strain C6 / ATCC BAA-1332).